The chain runs to 330 residues: Calponin-3 (330 aa).

N6-acetyllysine is present on Lys-23. Residues 26-130 form the Calponin-homology (CH) domain; that stretch reads QQAEEDLRNW…TLVALAGLAK (105 aa). Lys-158 is modified (N6-methyllysine). Calponin-like repeat units follow at residues 164-189, 204-229, and 243-268; these read IGLQMGTNKCASQAGMTAYGTRRHLY, ISLQMGTNKGASQAGMLAPGTRRDIY, and ISLQMGTNKVASQKGMSVYGLGRQVY. The interval 279–330 is disordered; the sequence is PVIHNGSQGTGTNGSEISDSDYQAEYPDEYHGEYPDDYPREYQYGDDQGIDY. Over residues 306–318 the composition is skewed to basic and acidic residues; the sequence is DEYHGEYPDDYPR.

It belongs to the calponin family.

Its function is as follows. Thin filament-associated protein that is implicated in the regulation and modulation of smooth muscle contraction. It is capable of binding to actin, calmodulin and tropomyosin. The interaction of calponin with actin inhibits the actomyosin Mg-ATPase activity. The sequence is that of Calponin-3 (Cnn3) from Mus musculus (Mouse).